Consider the following 478-residue polypeptide: Hemolysin secretion protein D, plasmid (478 aa).

Over 1–59 the chain is Cytoplasmic; the sequence is MKTWLMGFSEFLLRYKLVWSETWKIRKQLDTPVREKDENEFLPAHLELIETPVSRRPRL. Residues 60-80 traverse the membrane as a helical; Signal-anchor for type II membrane protein segment; sequence VAYFIMGFLVIAFILSVLGQV. At 81–478 the chain is on the periplasmic side; sequence EIVATANGKL…ESVTESLRER (398 aa).

It belongs to the membrane fusion protein (MFP) (TC 8.A.1) family.

The protein localises to the cell inner membrane. Functionally, involved in the transport of hemolysin A. This Escherichia coli protein is Hemolysin secretion protein D, plasmid (hlyD).